A 336-amino-acid chain; its full sequence is MADIWTDYGVPGAIIVAQILALMVPILVSVAFLVYAERKVLGLMQLRQGPNMVGPWGILQSFADALKMIGKETIIPAGANRIIFLAAPMLTMMLALAAWAVIPFGEGLVISDINVGILYLLAISSQGVYGIIMAGWASNSKYAFLGGLRSAAQMVSYEVSIGLVIITVLLCVGSLNLSDVVEAQKTVWFAIPLLPMFVIFFISALAETNRAPFDLPEGESELVGGFHTEYSGMAFGLFFLGEYANMILMSAMTSVLFLGGWLPPLDVAPLNWVPGPIWFILKICFCLFLFVWVRATVPRYRYDQLMRLGWKVFLPFSLVWVILTAGVLVTFDWLPK.

A run of 8 helical transmembrane segments spans residues 14–34 (IIVAQILALMVPILVSVAFLV), 82–102 (IIFLAAPMLTMMLALAAWAVI), 115–135 (VGILYLLAISSQGVYGIIMAG), 161–181 (IGLVIITVLLCVGSLNLSDVV), 186–206 (TVWFAIPLLPMFVIFFISALA), 247–267 (ILMSAMTSVLFLGGWLPPLDV), 273–293 (VPGPIWFILKICFCLFLFVWV), and 312–332 (VFLPFSLVWVILTAGVLVTFD).

It belongs to the complex I subunit 1 family. NDH-1 is composed of 14 different subunits. Subunits NuoA, H, J, K, L, M, N constitute the membrane sector of the complex.

The protein resides in the cell inner membrane. The catalysed reaction is a quinone + NADH + 5 H(+)(in) = a quinol + NAD(+) + 4 H(+)(out). In terms of biological role, NDH-1 shuttles electrons from NADH, via FMN and iron-sulfur (Fe-S) centers, to quinones in the respiratory chain. The immediate electron acceptor for the enzyme in this species is believed to be ubiquinone. Couples the redox reaction to proton translocation (for every two electrons transferred, four hydrogen ions are translocated across the cytoplasmic membrane), and thus conserves the redox energy in a proton gradient. This subunit may bind ubiquinone. This chain is NADH-quinone oxidoreductase subunit H, found in Rhodospirillum centenum (strain ATCC 51521 / SW).